Consider the following 661-residue polypeptide: Sperm transmembrane protein 9 (661 aa).

An N-terminal signal peptide occupies residues 1–16; the sequence is MNVILVLVVLFFAGDC. Topologically, residues 17–618 are extracellular; it reads AKIRKIIDFL…MTNRLMKNYE (602 aa). Residues 52-90 enclose the EGF-like 1 domain; sequence NFNPCLENPKICSNRGKCLHENGNFYCICPVTHYGKTCE. 3 cysteine pairs are disulfide-bonded: Cys56-Cys69, Cys63-Cys78, and Cys80-Cys89. Residues Asn105, Asn106, Asn134, and Asn190 are each glycosylated (N-linked (GlcNAc...) asparagine). Positions 210 to 259 constitute an EGF-like 2 domain; sequence QISACFDTQCDNGGICEDVVDWKTKTVTATCKCPSAIELIGGTVTGENCE. Cystine bridges form between Cys214–Cys225, Cys219–Cys240, and Cys242–Cys258. 4 N-linked (GlcNAc...) asparagine glycosylation sites follow: Asn279, Asn290, Asn316, and Asn338. Positions 377 to 379 match the Cell attachment site motif; that stretch reads RGD. 3 EGF-like domains span residues 377–414, 519–557, and 559–600; these read RGDR…EKCE, HTNP…SLCE, and VDDS…LDCN. Disulfide bonds link Cys385–Cys402, Cys393–Cys404, Cys413–Cys419, Cys523–Cys534, Cys528–Cys545, Cys547–Cys556, Cys563–Cys576, Cys571–Cys588, and Cys590–Cys599. A glycan (N-linked (GlcNAc...) asparagine) is linked at Asn549. The helical transmembrane segment at 619 to 639 threads the bilayer; the sequence is FSLPLVACFVSLAILLPVIVI. Over 640–661 the chain is Cytoplasmic; that stretch reads SRRRQGRVEEAKKTSEVKTENP.

Expressed in spermatids, during spermogenesis expression is primarily localized to the pseudopod.

It localises to the cytoplasm. Its subcellular location is the membrane. Required for fertilization. May be required for cell adhesion and/or function as a signaling molecule. In Caenorhabditis elegans, this protein is Sperm transmembrane protein 9 (spe-9).